The chain runs to 98 residues: Flagellar hook-basal body complex protein FliE (98 aa).

It belongs to the FliE family.

The protein resides in the bacterial flagellum basal body. The sequence is that of Flagellar hook-basal body complex protein FliE from Listeria monocytogenes serovar 1/2a (strain ATCC BAA-679 / EGD-e).